Reading from the N-terminus, the 357-residue chain is NADH-quinone oxidoreductase subunit H (357 aa).

8 consecutive transmembrane segments (helical) span residues 25 to 45 (ILIILIKAITLVIPLMLVVAY), 94 to 114 (IYLFLLAPVLAIAPAIAVWVV), 130 to 150 (LLYVLAIGSIGVYGIILAGWA), 166 to 186 (LLVSYEIVIGFALATVVMIAG), 201 to 221 (IIYWNFIPLFPMMIIFFISAL), 254 to 274 (FFLAEYANMILMAVLAVVMFF), 294 to 314 (VPGIIWLLAKTTFFMFLYLWV), and 329 to 349 (LSWKVFLPITIIWIFVVALMT).

The protein belongs to the complex I subunit 1 family. NDH-1 is composed of 14 different subunits. Subunits NuoA, H, J, K, L, M, N constitute the membrane sector of the complex.

The protein localises to the cell inner membrane. It carries out the reaction a quinone + NADH + 5 H(+)(in) = a quinol + NAD(+) + 4 H(+)(out). Functionally, NDH-1 shuttles electrons from NADH, via FMN and iron-sulfur (Fe-S) centers, to quinones in the respiratory chain. The immediate electron acceptor for the enzyme in this species is believed to be ubiquinone. Couples the redox reaction to proton translocation (for every two electrons transferred, four hydrogen ions are translocated across the cytoplasmic membrane), and thus conserves the redox energy in a proton gradient. This subunit may bind ubiquinone. This Ruthia magnifica subsp. Calyptogena magnifica protein is NADH-quinone oxidoreductase subunit H.